The sequence spans 136 residues: Small ribosomal subunit protein eS6 (136 aa).

Belongs to the eukaryotic ribosomal protein eS6 family.

This chain is Small ribosomal subunit protein eS6, found in Methanosarcina mazei (strain ATCC BAA-159 / DSM 3647 / Goe1 / Go1 / JCM 11833 / OCM 88) (Methanosarcina frisia).